The chain runs to 430 residues: Adenylosuccinate synthetase (430 aa).

GTP contacts are provided by residues 12–18 and 40–42; these read GDEGKGK and GHT. D13 (proton acceptor) is an active-site residue. D13 and G40 together coordinate Mg(2+). IMP is bound by residues 13 to 16, 38 to 41, T128, R142, Q223, T238, and R302; these read DEGK and NAGH. H41 serves as the catalytic Proton donor. Substrate is bound at residue 298–304; it reads TTTGRPR. Residues R304, 330–332, and 412–414 contribute to the GTP site; these read SID and SVG.

It belongs to the adenylosuccinate synthetase family. As to quaternary structure, homodimer. Mg(2+) serves as cofactor.

It localises to the cytoplasm. It catalyses the reaction IMP + L-aspartate + GTP = N(6)-(1,2-dicarboxyethyl)-AMP + GDP + phosphate + 2 H(+). It functions in the pathway purine metabolism; AMP biosynthesis via de novo pathway; AMP from IMP: step 1/2. Its function is as follows. Plays an important role in the de novo pathway of purine nucleotide biosynthesis. Catalyzes the first committed step in the biosynthesis of AMP from IMP. The polypeptide is Adenylosuccinate synthetase (Streptococcus pyogenes serotype M12 (strain MGAS9429)).